The following is a 786-amino-acid chain: Neprilysin-3 (786 aa).

The Cytoplasmic segment spans residues 1 to 52; sequence MTRYKQTEFTEDDSSSIGGIQLNEATGHTGMQIRYHTARATWNWRSRNKTEK. A helical; Signal-anchor for type II membrane protein membrane pass occupies residues 53–73; that stretch reads WLLITTFVMAITIFTLLIVLF. Residues 74–786 are Extracellular-facing; it reads TDGGSSDATK…MNPTEKCEVW (713 aa). A Peptidase M13 domain is found at 102-786; it reads PCLNKHCIFA…MNPTEKCEVW (685 aa). Cystine bridges form between Cys-103-Cys-108, Cys-126-Cys-771, Cys-134-Cys-731, Cys-190-Cys-450, and Cys-659-Cys-783. Asn-216, Asn-226, Asn-256, Asn-279, Asn-305, Asn-325, Asn-356, Asn-388, Asn-496, and Asn-569 each carry an N-linked (GlcNAc...) asparagine glycan. His-622 is a Zn(2+) binding site. The active site involves Glu-623. Zn(2+)-binding residues include His-626 and Glu-682. Asp-686 functions as the Proton donor in the catalytic mechanism. N-linked (GlcNAc...) asparagine glycosylation occurs at Asn-715.

The protein belongs to the peptidase M13 family. Zn(2+) serves as cofactor.

It localises to the cell membrane. It catalyses the reaction Preferential cleavage of polypeptides between hydrophobic residues, particularly with Phe or Tyr at P1'.. In terms of biological role, metalloendoprotease which is required in the dorsal paired medial neurons for the proper formation of long-term (LTM) and middle-term memories (MTM). Also required in the mushroom body neurons where it functions redundantly with neprilysins Nep2 and Nep4 in normal LTM formation. The polypeptide is Neprilysin-3 (Drosophila melanogaster (Fruit fly)).